Here is a 103-residue protein sequence, read N- to C-terminus: Large ribosomal subunit protein bL21 (103 aa).

The protein belongs to the bacterial ribosomal protein bL21 family. As to quaternary structure, part of the 50S ribosomal subunit. Contacts protein L20.

This protein binds to 23S rRNA in the presence of protein L20. The sequence is that of Large ribosomal subunit protein bL21 from Acidithiobacillus ferrooxidans (strain ATCC 23270 / DSM 14882 / CIP 104768 / NCIMB 8455) (Ferrobacillus ferrooxidans (strain ATCC 23270)).